A 63-amino-acid chain; its full sequence is Large ribosomal subunit protein uL30 (63 aa).

This sequence belongs to the universal ribosomal protein uL30 family. As to quaternary structure, part of the 50S ribosomal subunit.

This is Large ribosomal subunit protein uL30 from Coxiella burnetii (strain CbuK_Q154) (Coxiella burnetii (strain Q154)).